The sequence spans 288 residues: HTH-type transcriptional regulator CzcR (288 aa).

In terms of domain architecture, HTH lysR-type spans 1–58; that stretch reads MELRDLQIFQSVADQGSVSSAAKELNYVQSNVTARIKQLENELKTPLFYRHKRGMTLT. A DNA-binding region (H-T-H motif) is located at residues 18-37; the sequence is VSSAAKELNYVQSNVTARIK.

The protein belongs to the LysR transcriptional regulatory family.

This chain is HTH-type transcriptional regulator CzcR (czcR), found in Bacillus cereus (strain ATCC 10987 / NRS 248).